A 332-amino-acid polypeptide reads, in one-letter code: 3-ketodihydrosphingosine reductase (332 aa).

Positions 1 to 25 (MLLLAAASLVAFVLLLYMVSPLISP) are cleaved as a signal peptide. At 26-269 (KPLALPGAHV…QGNFNSSIGS (244 aa)) the chain is on the cytoplasmic side. Residues G39, S41, S42, G43, R64, K68, and D93 each coordinate NADPH. A GXSXG motif is present at residues 39 to 43 (GGSSG). S172 serves as the catalytic Proton donor. The active-site Proton acceptor is Y186. NADP(+) contacts are provided by Y186 and K190. K190 acts as the Lowers pKa of active site Tyr in catalysis. The chain crosses the membrane as a helical span at residues 270–290 (DGYMLSSLTCGMAPVTSIMEG). At 291-292 (LQ) the chain is on the lumenal side. A helical transmembrane segment spans residues 293-313 (QVVTMGLFRTIALFYLGSFDS). Over 314-331 (IVRRCMMQKAKLETVDKT) the chain is Cytoplasmic.

It belongs to the short-chain dehydrogenases/reductases (SDR) family.

It is found in the endoplasmic reticulum membrane. It catalyses the reaction sphinganine + NADP(+) = 3-oxosphinganine + NADPH + H(+). It participates in lipid metabolism; sphingolipid metabolism. In terms of biological role, catalyzes the reduction of 3'-oxosphinganine (3-ketodihydrosphingosine/KDS) to sphinganine (dihydrosphingosine/DHS), the second step of de novo sphingolipid biosynthesis. In Bos taurus (Bovine), this protein is 3-ketodihydrosphingosine reductase (KDSR).